The primary structure comprises 350 residues: Quercetin 2,3-dioxygenase (350 aa).

Residues 1–145 (DTSSLIVEDA…FYYLGTNATD (145 aa)) are cupin 1. Cu cation is bound by residues His-66, His-68, and Glu-73. His-66 is a binding site for substrate. Glu-73 contributes to the substrate binding site. N-linked (GlcNAc...) asparagine glycans are attached at residues Asn-90 and Asn-109. Residue His-112 participates in Cu cation binding. Asn-142 is a glycosylation site (N-linked (GlcNAc...) asparagine). The interval 146 to 205 (TTHTPYIPSSSDSSSTTGPDSSTISTLQSFDVYAELSFTPRTDTVNGTAPANTVWHTGAN) is linker. Residues 148–167 (HTPYIPSSSDSSSTTGPDSS) are disordered. Residues 152–167 (IPSSSDSSSTTGPDSS) are compositionally biased toward low complexity. N-linked (GlcNAc...) asparagine glycosylation is found at Asn-191 and Asn-248. Positions 206-350 (ALASTAGDPY…WSSVSFPADW (145 aa)) are cupin 2.

Homodimer. Cu cation is required as a cofactor. The N-linked glycan at Asn-191 consists of Man(5)-GlcNAc(2).

The catalysed reaction is quercetin + O2 = 2-(3,4-dihydroxybenzoyloxy)-4,6-dihydroxybenzoate + CO. Its pathway is flavonoid metabolism; quercetin degradation. Its activity is regulated as follows. Inhibited by diethyldithiocarbamate and kojic acid. Its function is as follows. Performs the first step in the degradation of the flavonoid quercetin by a dioxygenase reaction. The enzyme catalyzes the cleavage of the O-heteroaromatic ring of the flavonol quercetin yielding the depside 2-protocatechuoyl-phloroglucinol carboxylic acid and carbon monoxide. This involves the remarkable dioxygenolytic cleavage of two carbon-carbon bonds. This Aspergillus japonicus protein is Quercetin 2,3-dioxygenase.